We begin with the raw amino-acid sequence, 242 residues long: Prosalusin (242 aa).

The N-terminal stretch at 1–26 is a signal peptide; that stretch reads MAAATRSCRPWGSLLGLIWLVSAAAA. Residues 27 to 189 constitute a propeptide that is removed on maturation; it reads SWDLSSLRCN…SSWVVYGTNY (163 aa). Residue 93–100 coordinates ATP; it reads GWTGTGKS. A glycan (N-linked (GlcNAc...) asparagine) is linked at asparagine 149.

The protein belongs to the ClpA/ClpB family. Torsin subfamily.

It localises to the secreted. Its function is as follows. Salusin may be a endocrine and/or paracrine factor able to increase intracellular calcium concentrations and induce cell mitogenesis. Salusin may also be a potent hypotensive peptide. The polypeptide is Prosalusin (TOR2A) (Bos taurus (Bovine)).